Here is a 263-residue protein sequence, read N- to C-terminus: tRNA pseudouridine synthase A (263 aa).

D53 functions as the Nucleophile in the catalytic mechanism. Residue Y111 coordinates substrate. Residues 232–263 (TAPGHGLISGRSNMTNGKLENNKTTNPCVTKY) are disordered. Residues 241–263 (GRSNMTNGKLENNKTTNPCVTKY) are compositionally biased toward polar residues.

It belongs to the tRNA pseudouridine synthase TruA family. In terms of assembly, homodimer.

It catalyses the reaction uridine(38/39/40) in tRNA = pseudouridine(38/39/40) in tRNA. Its function is as follows. Formation of pseudouridine at positions 38, 39 and 40 in the anticodon stem and loop of transfer RNAs. The polypeptide is tRNA pseudouridine synthase A (Halalkalibacterium halodurans (strain ATCC BAA-125 / DSM 18197 / FERM 7344 / JCM 9153 / C-125) (Bacillus halodurans)).